Reading from the N-terminus, the 335-residue chain is Methionine import ATP-binding protein MetN (335 aa).

In terms of domain architecture, ABC transporter spans 2–241; that stretch reads IQFQRLHKSY…PKHATTRRFV (240 aa). 38–45 is an ATP binding site; it reads GHSGAGKS.

The protein belongs to the ABC transporter superfamily. Methionine importer (TC 3.A.1.24) family. The complex is composed of two ATP-binding proteins (MetN), two transmembrane proteins (MetI) and a solute-binding protein (MetQ).

It is found in the cell inner membrane. It carries out the reaction L-methionine(out) + ATP + H2O = L-methionine(in) + ADP + phosphate + H(+). The enzyme catalyses D-methionine(out) + ATP + H2O = D-methionine(in) + ADP + phosphate + H(+). In terms of biological role, part of the ABC transporter complex MetNIQ involved in methionine import. Responsible for energy coupling to the transport system. This Xanthomonas euvesicatoria pv. vesicatoria (strain 85-10) (Xanthomonas campestris pv. vesicatoria) protein is Methionine import ATP-binding protein MetN.